We begin with the raw amino-acid sequence, 78 residues long: MNVSNNAGIDSNDLAKRGESLIRKSTNRYLTTVRIAFRAKQRRFDDFDGLLEESTIKPVQRSIIELSDEQDQPDLLPG.

This sequence belongs to the RNA polymerase subunit omega family. As to quaternary structure, in cyanobacteria the RNAP catalytic core is composed of 2 alpha, 1 beta, 1 beta', 1 gamma and 1 omega subunit. When a sigma factor is associated with the core the holoenzyme is formed, which can initiate transcription.

The enzyme catalyses RNA(n) + a ribonucleoside 5'-triphosphate = RNA(n+1) + diphosphate. Promotes RNA polymerase assembly. Latches the N- and C-terminal regions of the beta' subunit thereby facilitating its interaction with the beta and alpha subunits. The polypeptide is DNA-directed RNA polymerase subunit omega (Prochlorococcus marinus (strain MIT 9312)).